A 176-amino-acid polypeptide reads, in one-letter code: Dual-action ribosomal maturation protein DarP (176 aa).

It belongs to the DarP family.

Its subcellular location is the cytoplasm. In terms of biological role, member of a network of 50S ribosomal subunit biogenesis factors which assembles along the 30S-50S interface, preventing incorrect 23S rRNA structures from forming. Promotes peptidyl transferase center (PTC) maturation. This Aliivibrio fischeri (strain MJ11) (Vibrio fischeri) protein is Dual-action ribosomal maturation protein DarP.